The following is a 493-amino-acid chain: 3-octaprenyl-4-hydroxybenzoate carboxy-lyase (493 aa).

Asparagine 172 is a Mn(2+) binding site. Residues 175-177, 189-191, and 194-195 each bind prenylated FMN; these read IYR, RWL, and RG. Residue glutamate 238 coordinates Mn(2+). Aspartate 287 (proton donor) is an active-site residue.

This sequence belongs to the UbiD family. In terms of assembly, homohexamer. Prenylated FMN serves as cofactor. Mn(2+) is required as a cofactor.

It is found in the cell membrane. The enzyme catalyses a 4-hydroxy-3-(all-trans-polyprenyl)benzoate + H(+) = a 2-(all-trans-polyprenyl)phenol + CO2. It participates in cofactor biosynthesis; ubiquinone biosynthesis. Functionally, catalyzes the decarboxylation of 3-octaprenyl-4-hydroxy benzoate to 2-octaprenylphenol, an intermediate step in ubiquinone biosynthesis. This is 3-octaprenyl-4-hydroxybenzoate carboxy-lyase from Shewanella baltica (strain OS155 / ATCC BAA-1091).